The sequence spans 159 residues: Bacterioferritin (159 aa).

The Ferritin-like diiron domain maps to methionine 1–glycine 145. Glutamate 51 serves as a coordination point for Fe cation. Position 52 (methionine 52) interacts with heme b. Fe cation contacts are provided by histidine 54, glutamate 94, glutamate 127, and histidine 130.

Belongs to the bacterioferritin family. As to quaternary structure, homooligomer of 24 subunits, arranged as 12 dimers, that are packed together to form an approximately spherical molecule with a central cavity, in which large amounts of iron can be deposited. Requires heme b as cofactor.

It catalyses the reaction 4 Fe(2+) + O2 + 4 H(+) = 4 Fe(3+) + 2 H2O. The enzyme catalyses Fe(2+)(in) = Fe(2+)(out). In terms of biological role, iron-storage protein, whose ferroxidase center binds Fe(2+), oxidizes it using dioxygen to Fe(3+), and participates in the subsequent Fe(3+) oxide mineral core formation within the central cavity of the BFR protein shell. The protein is Bacterioferritin (bfr) of Mycobacterium avium.